We begin with the raw amino-acid sequence, 62 residues long: Weak neurotoxin 5 (62 aa).

5 disulfides stabilise this stretch: Cys3–Cys24, Cys6–Cys11, Cys17–Cys40, Cys44–Cys54, and Cys55–Cys60.

It belongs to the three-finger toxin family. Ancestral subfamily. Orphan group II sub-subfamily. In terms of tissue distribution, expressed by the venom gland.

It is found in the secreted. Functionally, binds with low affinity to muscular (alpha-1-beta-1-delta-epsilon/CHRNA1-CHRNB1-CHRND-CHRNE) and very low affinity to neuronal (alpha-7/CHRNA7) nicotinic acetylcholine receptor (nAChR). This is Weak neurotoxin 5 from Naja naja (Indian cobra).